A 354-amino-acid chain; its full sequence is MATTAASSLLKSSFAGSRLPSATRAPSSVVVSTGGAPRTAAISASISSSNPPYDLTSFKFSPIKESIVSREMTRRYMTDMITHADTDVVIVGAGSAGLSCAYELSKDPTVRVAIVEQSVSPGGGAWLGGQLFSAMVVRKPAHLFLDELGVAYDEAADDYVVVKHAALFTSTVMSAVLARPNVKLFNAVAVEDLIVKGGRVGGVVTNWALVSMNHDTQSCMDPNVMEAKVVVSSCGHDGPFGATGVKRLQDIGMIAAVPGMKALDMNAAEDAIVRLTREVVPGMIVTGMEVAEIDGAPRMGPTFGAMMISGQKAAHLALKALGRPNAVDGTIPKVSPALREEFVIASKDDEVVDA.

The transit peptide at 1 to 43 (MATTAASSLLKSSFAGSRLPSATRAPSSVVVSTGGAPRTAAIS) directs the protein to the chloroplast. Substrate contacts are provided by residues Ala96, 116 to 117 (EQ), Gly124, and Val190. Cys219 carries the post-translational modification 2,3-didehydroalanine (Cys). Substrate contacts are provided by residues Asp221, His236, Met288, and 298-300 (RMG).

This sequence belongs to the THI4 family. In terms of assembly, homooctamer. Fe cation is required as a cofactor. In terms of processing, during the catalytic reaction, a sulfide is transferred from Cys-219 to a reaction intermediate, generating a dehydroalanine residue.

The protein localises to the plastid. It localises to the chloroplast. It catalyses the reaction [ADP-thiazole synthase]-L-cysteine + glycine + NAD(+) = [ADP-thiazole synthase]-dehydroalanine + ADP-5-ethyl-4-methylthiazole-2-carboxylate + nicotinamide + 3 H2O + 2 H(+). In terms of biological role, involved in biosynthesis of the thiamine precursor thiazole. Catalyzes the conversion of NAD and glycine to adenosine diphosphate 5-(2-hydroxyethyl)-4-methylthiazole-2-carboxylic acid (ADT), an adenylated thiazole intermediate. The reaction includes an iron-dependent sulfide transfer from a conserved cysteine residue of the protein to a thiazole intermediate. The enzyme can only undergo a single turnover, which suggests it is a suicide enzyme. May have additional roles in adaptation to various stress conditions and in DNA damage tolerance. The chain is Thiamine thiazole synthase 1, chloroplastic from Sorghum bicolor (Sorghum).